Reading from the N-terminus, the 328-residue chain is L-lactate dehydrogenase (328 aa).

Residues valine 18, glutamate 39, lysine 46, tyrosine 71, and 85–86 each bind NAD(+); that span reads GA. Substrate-binding residues include glutamine 88 and arginine 94. NAD(+) is bound by residues serine 107, 124–126, and serine 149; that span reads AAN. Residue 126 to 129 participates in substrate binding; sequence NPVD. 154–157 contributes to the substrate binding site; that stretch reads DSAR. Residues arginine 159 and histidine 174 each coordinate beta-D-fructose 1,6-bisphosphate. Catalysis depends on histidine 181, which acts as the Proton acceptor. Position 226 is a phosphotyrosine (tyrosine 226). Threonine 235 serves as a coordination point for substrate.

This sequence belongs to the LDH/MDH superfamily. LDH family. As to quaternary structure, homotetramer.

The protein localises to the cytoplasm. It carries out the reaction (S)-lactate + NAD(+) = pyruvate + NADH + H(+). The protein operates within fermentation; pyruvate fermentation to lactate; (S)-lactate from pyruvate: step 1/1. With respect to regulation, allosterically activated by fructose 1,6-bisphosphate (FBP). Functionally, catalyzes the conversion of lactate to pyruvate. The sequence is that of L-lactate dehydrogenase from Streptococcus thermophilus (strain CNRZ 1066).